Consider the following 294-residue polypeptide: MSETTTVPPIETVSEPNPFIVFATVATIISAFIGYYFLQQSKKHTPVLKPDEFQKFPLIEKIRVSHNSAIYRFGLPKSTDRLGLPIGQHISIGATIDGKEVVRSYTPISTDDQLGHFDLLIKTYENGNISRHVAGKNVGEHIEIRGPKGFFTYTPNMVKSFGMIAGGTGIAPMYQIITAILKNPEDKTKIHLVYANVTESDILLKEELDNFAARHPDRLKIHYVLNEAPANWQGSVGFVTPEIIDTHLPKASNDTNLLLCGPPPMVSAMKKAAVELGFQKAKPVSKLGDQVFVF.

The chain crosses the membrane as a helical span at residues 18 to 38 (PFIVFATVATIISAFIGYYFL). Positions 51 to 154 (DEFQKFPLIE…RGPKGFFTYT (104 aa)) constitute an FAD-binding FR-type domain. Residues 134-149 (AGKN…GPKG) and 160-192 (SFGM…KIHL) each bind FAD.

The protein belongs to the flavoprotein pyridine nucleotide cytochrome reductase family. Monomer. Component of the 2-(3-amino-3-carboxypropyl)histidine synthase complex composed of DPH1, DPH2, DPH3 and a NADH-dependent reductase, predominantly CBR1. The cofactor is FAD.

Its subcellular location is the mitochondrion outer membrane. It carries out the reaction 2 Fe(III)-[cytochrome b5] + NADH = 2 Fe(II)-[cytochrome b5] + NAD(+) + H(+). The enzyme catalyses 2 Fe(3+)-[Dph3] + NADH = 2 Fe(2+)-[Dph3] + NAD(+) + H(+). Its pathway is protein modification; peptidyl-diphthamide biosynthesis. Its function is as follows. NADH-dependent reductase for DPH3 and cytochrome b5. Required for the first step of diphthamide biosynthesis, a post-translational modification of histidine which occurs in elongation factor 2. DPH1 and DPH2 transfer a 3-amino-3-carboxypropyl (ACP) group from S-adenosyl-L-methionine (SAM) to a histidine residue, the reaction is assisted by a reduction system comprising DPH3 and a NADH-dependent reductase, predominantly CBR1. By reducing DPH3, also involved in the formation of the tRNA wobble base modification mcm5s 2U (5-methoxycarbonylmethyl-2-thiouridine), mediated by the elongator complex. The cytochrome b5/NADH cytochrome b5 reductase electron transfer system supports the catalytic activity of several sterol biosynthetic enzymes. This Candida albicans (strain SC5314 / ATCC MYA-2876) (Yeast) protein is NADH-cytochrome b5 reductase 1 (CBR1).